A 359-amino-acid chain; its full sequence is Heme A synthase (359 aa).

Transmembrane regions (helical) follow at residues 8-28 (IMSI…VVGG), 94-114 (LLGR…CYLK), 124-144 (LLLI…MVKS), 159-179 (GHLL…LIII), and 215-235 (IIIF…GLDA). Histidine 274 contributes to the heme binding site. Transmembrane regions (helical) follow at residues 276–296 (WFGI…IILN), 303–323 (MGMV…ITLL), and 328–348 (ILAA…FLFI). Heme is bound at residue histidine 334.

It belongs to the COX15/CtaA family. Type 2 subfamily. As to quaternary structure, interacts with CtaB. The cofactor is heme b.

It localises to the cell membrane. The catalysed reaction is Fe(II)-heme o + 2 A + H2O = Fe(II)-heme a + 2 AH2. The protein operates within porphyrin-containing compound metabolism; heme A biosynthesis; heme A from heme O: step 1/1. Catalyzes the conversion of heme O to heme A by two successive hydroxylations of the methyl group at C8. The first hydroxylation forms heme I, the second hydroxylation results in an unstable dihydroxymethyl group, which spontaneously dehydrates, resulting in the formyl group of heme A. This chain is Heme A synthase, found in Orientia tsutsugamushi (strain Boryong) (Rickettsia tsutsugamushi).